The following is a 117-amino-acid chain: Big defensin (117 aa).

Residues Met-1–Ala-23 form the signal peptide. Residues Val-24–Glu-33 constitute a propeptide that is removed on maturation. 3 cysteine pairs are disulfide-bonded: Cys-82–Cys-112, Cys-89–Cys-107, and Cys-93–Cys-113.

This sequence belongs to the big defensin family.

Its subcellular location is the secreted. Functionally, significantly inhibits the growth of Gram-negative and Gram-positive bacteria and fungi in vitro. The sequence is that of Big defensin from Branchiostoma belcheri (Amphioxus).